A 322-amino-acid polypeptide reads, in one-letter code: CXXC-type zinc finger protein 5 (322 aa).

Residues 1–10 (MSSLGGGSQD) show a composition bias toward gly residues. The interval 1–100 (MSSLGGGSQD…SGGGSMMGGE (100 aa)) is disordered. Low complexity-rich tracts occupy residues 11–20 (AGGSSSSSTN) and 28–52 (SGPK…VADD). At Thr53 the chain carries Phosphothreonine. The span at 87–97 (SSGGSGGGSMM) shows a compositional bias: gly residues. The segment at 256 to 297 (GKKKRKRCGMCAPCRRRINCEQCSSCRNRKTGHQICKFRKCE) adopts a CXXC-type zinc-finger fold. Residues 257 to 262 (KKKRKR) carry the Nuclear localization signal motif. Zn(2+)-binding residues include Cys263, Cys266, Cys269, Cys275, Cys278, Cys281, Cys291, and Cys296.

In terms of assembly, interacts with DVL1. Interacts with RBPJ.

Its subcellular location is the nucleus. It localises to the cytoplasm. Functionally, may indirectly participate in activation of the NF-kappa-B and MAPK pathways. Acts as a mediator of BMP4-mediated modulation of canonical Wnt signaling activity in neural stem cells. Required for DNA damage-induced ATM phosphorylation, p53 activation and cell cycle arrest. Involved in myelopoiesis. Transcription factor. Binds to the oxygen responsive element of COX4I2 and represses its transcription under hypoxia conditions (4% oxygen), as well as normoxia conditions (20% oxygen). May repress COX4I2 transactivation induced by CHCHD2 and RBPJ. Binds preferentially to DNA containing cytidine-phosphate-guanosine (CpG) dinucleotides over CpH (H=A, T, and C), hemimethylated-CpG and hemimethylated-hydroxymethyl-CpG. In Homo sapiens (Human), this protein is CXXC-type zinc finger protein 5 (CXXC5).